Reading from the N-terminus, the 566-residue chain is Zinc finger protein 704 (566 aa).

3 disordered regions span residues 1-148 (MQAR…ARGA), 166-203 (DFRR…LDQE), and 253-324 (PLVR…DEAD). Residues 12 to 31 (LGSRRGGAAPAPAPEAAALG) show a composition bias toward low complexity. Pro residues predominate over residues 32-55 (LPPPGPSPAAAPGSWRPPLPPPRG). Over residues 56–72 (TGPSRAAAASSPVLLLL) the composition is skewed to low complexity. Basic and acidic residues predominate over residues 91–100 (RVTEKPRGVA). Acidic residues predominate over residues 101 to 128 (EEEDDDEEEDEEVVVEVVDGDEDDEDAE). The span at 186 to 203 (EDVRTADTKKTSRVLDQE) shows a compositional bias: basic and acidic residues. Positions 267 to 290 (SGSWKEGAPSSSSSSGYWSWSAPS) are enriched in low complexity. A C2H2-type zinc finger spans residues 346 to 371 (FKCLWKSCGKVLNTAAGIQKHIRAVH). 2 positions are modified to phosphoserine: S378 and S381. Disordered regions lie at residues 409 to 436 (VSPS…CAKT) and 497 to 535 (PVSP…PRGE). The segment at 471–566 (GSAKFTPNGS…WKKACQRFID (96 aa)) is sufficient for binding to RE2 sequence motifs. The short motif at 537–541 (KKCRK) is the CR1 element. Residues 555–559 (CRWKK) carry the CR2 motif.

Its subcellular location is the nucleus. In terms of biological role, transcription factor which binds to RE2 sequence elements in the MYOD1 enhancer. In Mus musculus (Mouse), this protein is Zinc finger protein 704.